Here is a 68-residue protein sequence, read N- to C-terminus: Large ribosomal subunit protein uL29 (68 aa).

It belongs to the universal ribosomal protein uL29 family.

The sequence is that of Large ribosomal subunit protein uL29 (rpl29) from Pyrococcus horikoshii (strain ATCC 700860 / DSM 12428 / JCM 9974 / NBRC 100139 / OT-3).